Consider the following 511-residue polypeptide: MINTDDNLLMIEALLTSDPSPPLLPANLSLETTLPKRLHAVLNGTHEPWSYAIFWKPSYDDFSGEAVLKWGDGVYTGGNEEKTRGRLRRKKTILSSPEEKERRSNVIRELNLMISGEAFPVVEDDVSDDDDVEVTDMEWFFLVSMTWSFGNGSGLAGKAFASYNPVLVTGSDLIYGSGCDRAKQGGDVGLQTILCIPSHNGVLELASTEEIRPNSDLFNRIRFLFGGSKYFSGAPNSNSELFPFQLESSCSSTVTGNPNPSPVYLQNRYNLNFSTSSSTLARAPCGDVLSFGENVKQSFENRNPNTYSDQIQNVVPHATVMLEKKKGKKRGRKPAHGRDKPLNHVEAERMRREKLNHRFYALRAVVPNVSKMDKTSLLEDAVCYINELKSKAENVELEKHAIEIQFNELKEIAGQRNAIPSVCKYEEKASEMMKIEVKIMESDDAMVRVESRKDHHPGARLMNALMDLELEVNHASISVMNDLMIQQANVKMGLRIYKQEELRDLLMSKIS.

One can recognise a bHLH domain in the interval 339-388 (DKPLNHVEAERMRREKLNHRFYALRAVVPNVSKMDKTSLLEDAVCYINEL).

In terms of assembly, homodimer.

The protein resides in the nucleus. The protein is Transcription factor bHLH28 (BHLH28) of Arabidopsis thaliana (Mouse-ear cress).